Reading from the N-terminus, the 196-residue chain is MKPQVVFVLGGPGAGKGTQCARIVENYSYTHLSAGDLLREERSRTDSEFGQLIDSYIKEGKIVPVQITINLLRKAMEETMKADEKKFRFLIDGFPRNQDNLQGWNTEMDGKADVKFVLFFDCSNEVCIDRCLERGKSSGRTDDNRESLEKRIQTYLQSTRPIIELYEKQGKVQRIDASRSVDEVFADVKNILEKDD.

13–18 (GAGKGT) is an ATP binding site. Positions 33–63 (SAGDLLREERSRTDSEFGQLIDSYIKEGKIV) are NMP. A ribonucleoside 5'-phosphate-binding positions include Arg-39, 61–63 (KIV), and 93–96 (GFPR). Asn-100 lines the CMP pocket. The interval 133 to 143 (ERGKSSGRTDD) is LID. Arg-134 provides a ligand contact to ATP. Residues Arg-140 and Arg-151 each coordinate a ribonucleoside 5'-phosphate. Arg-179 provides a ligand contact to ATP.

This sequence belongs to the adenylate kinase family. UMP-CMP kinase subfamily. Monomer. It depends on Mg(2+) as a cofactor.

The protein resides in the nucleus. It is found in the cytoplasm. It catalyses the reaction CMP + ATP = CDP + ADP. The catalysed reaction is dCMP + ATP = dCDP + ADP. The enzyme catalyses UMP + ATP = UDP + ADP. It carries out the reaction a 2'-deoxyribonucleoside 5'-diphosphate + ATP = a 2'-deoxyribonucleoside 5'-triphosphate + ADP. It catalyses the reaction a ribonucleoside 5'-diphosphate + ATP = a ribonucleoside 5'-triphosphate + ADP. Its function is as follows. Catalyzes the phosphorylation of pyrimidine nucleoside monophosphates at the expense of ATP. Plays an important role in de novo pyrimidine nucleotide biosynthesis. Has preference for UMP and CMP as phosphate acceptors. Also displays broad nucleoside diphosphate kinase activity. This chain is UMP-CMP kinase (cmpk), found in Danio rerio (Zebrafish).